Reading from the N-terminus, the 381-residue chain is MDRLLTISNHIGKNIRQFSTSTEEVLFEKKGKCLKVLLNRPKALNALNPNMVKILTPKYLEMKTKKDGEGVIVMKGAGEKAFCAGGDIRAIYDYKQLNEEQKSKTNDIGDLFFREEYILNNLIGTNPIAQVSIYNGFAMGGGIGLSVHGKFRVATENTVFAMPETGIGFFCDVGGSYFLPRLPNNYGMYLALTGSKLKGNNVYLAGVATHFVSNEHIQALEKEIEECENPTSQTINSILTKYHDKSKSTSNEYNDNLGDIERIFGKNSVKEIFEQLELLENSEWAKQTLKTLKSVSPSSLMVVFEQMKQGAKLPSLAKCLEMEFRISQHFLEKPDFFEGVRALLVDKDKNPKWLPPSIDQIDQTLVNSYFKPLSNNKELKF.

A mitochondrion-targeting transit peptide spans 1 to 25 (MDRLLTISNHIGKNIRQFSTSTEEV). Glu-116, Gly-141, Glu-164, and Asp-172 together coordinate substrate.

Belongs to the enoyl-CoA hydratase/isomerase family.

The protein resides in the mitochondrion. The catalysed reaction is 3-hydroxy-2-methylpropanoyl-CoA + H2O = 3-hydroxy-2-methylpropanoate + CoA + H(+). It functions in the pathway amino-acid degradation; L-valine degradation. Functionally, hydrolyzes 3-hydroxyisobutyryl-CoA (HIBYL-CoA), a saline catabolite. In Dictyostelium discoideum (Social amoeba), this protein is 3-hydroxyisobutyryl-CoA hydrolase, mitochondrial (hibch).